Reading from the N-terminus, the 583-residue chain is Pyruvate kinase isozyme A, chloroplastic (583 aa).

The transit peptide at 1–74 directs the protein to the chloroplast; the sequence is MSQSLHFSPN…NSGVLYNNNN (74 aa). The segment covering 43-52 has biased composition (low complexity); it reads KASTSPSSSS. Residues 43–75 are disordered; that stretch reads KASTSPSSSSDPQVLVADNGTGNSGVLYNNNNK. Polar residues predominate over residues 62 to 75; the sequence is GTGNSGVLYNNNNK. Substrate is bound at residue arginine 134. K(+)-binding residues include asparagine 136, aspartate 168, and threonine 169. An ATP-binding site is contributed by 136 to 139; sequence NMCH. Glutamate 333 serves as a coordination point for Mg(2+). Substrate-binding residues include glycine 356, aspartate 357, and serine 389. Aspartate 357 provides a ligand contact to Mg(2+).

The protein belongs to the pyruvate kinase family. In terms of assembly, oligomer of alpha and beta subunits. Mg(2+) is required as a cofactor. K(+) serves as cofactor.

The protein resides in the plastid. It is found in the chloroplast. The catalysed reaction is pyruvate + ATP = phosphoenolpyruvate + ADP + H(+). It functions in the pathway carbohydrate degradation; glycolysis; pyruvate from D-glyceraldehyde 3-phosphate: step 5/5. This chain is Pyruvate kinase isozyme A, chloroplastic, found in Ricinus communis (Castor bean).